The primary structure comprises 258 residues: Fibroblast growth factor-binding protein 3 (258 aa).

An N-terminal signal peptide occupies residues 1 to 26 (MTPPKLRASLSPSLLLLLSGCLLAAA). 2 disulfide bridges follow: Cys59-Cys80 and Cys90-Cys124. The disordered stretch occupies residues 146-231 (RLVPRASPPA…GTGPDPDGLD (86 aa)). Residues 186–197 (GTPPPQSAPPKE) show a composition bias toward pro residues. Basic and acidic residues predominate over residues 198 to 209 (NPSERKTNEGKR). Cys241 and Cys249 are oxidised to a cystine.

The protein belongs to the fibroblast growth factor-binding protein family. Interacts with FGF2.

The protein resides in the secreted. Heparin-binding protein which binds to FGF2, prevents binding of FGF2 to heparin and probably inhibits immobilization of FGF2 on extracellular matrix glycosaminoglycans, allowing its release and subsequent activation of FGFR signaling which leads to increased vascular permeability. The sequence is that of Fibroblast growth factor-binding protein 3 (FGFBP3) from Homo sapiens (Human).